The chain runs to 132 residues: Transmembrane protein 170B (132 aa).

Residues 1–37 (MRAEGADHSMINLSVQQVLSLWAHGTVLRNLTEMWYW) are Extracellular-facing. N-linked (GlcNAc...) asparagine glycosylation is present at Asn12. A helical membrane pass occupies residues 38–58 (IFLWALFSSLFVHGAAGVLMF). Residues 59–68 (VMLQRHRQGR) lie on the Cytoplasmic side of the membrane. A helical transmembrane segment spans residues 69–89 (VISIIAVSIGFLASVTGAMIT). The Extracellular portion of the chain corresponds to 90–104 (SAAVAGIYRVAGKNM). The helical transmembrane segment at 105 to 125 (APLEALVWGVGQTVLTLIISF) threads the bilayer. Topologically, residues 126-132 (SRILATL) are cytoplasmic.

This sequence belongs to the TMEM170 family. As to quaternary structure, interacts with CTNNB1.

The protein resides in the cell membrane. This is Transmembrane protein 170B from Mus musculus (Mouse).